The chain runs to 385 residues: Cytochrome b (385 aa).

Transmembrane regions (helical) follow at residues Met-32–Met-52, Trp-76–Ala-98, Val-113–Cys-133, and Phe-179–Met-199. Residues His-82 and His-96 each contribute to the heme b site. His-183 and His-197 together coordinate heme b. His-202 lines the a ubiquinone pocket. The next 4 helical transmembrane spans lie at Phe-225–Phe-245, Leu-289–Asp-309, Ile-321–Ser-341, and Phe-348–Pro-368.

The protein belongs to the cytochrome b family. Fungal cytochrome b-c1 complex contains 10 subunits; 3 respiratory subunits, 2 core proteins and 5 low-molecular weight proteins. Cytochrome b-c1 complex is a homodimer. It depends on heme b as a cofactor.

It is found in the mitochondrion inner membrane. Component of the ubiquinol-cytochrome c reductase complex (complex III or cytochrome b-c1 complex) that is part of the mitochondrial respiratory chain. The b-c1 complex mediates electron transfer from ubiquinol to cytochrome c. Contributes to the generation of a proton gradient across the mitochondrial membrane that is then used for ATP synthesis. The sequence is that of Cytochrome b (COB) from Monosporozyma servazzii (Yeast).